A 451-amino-acid polypeptide reads, in one-letter code: Threonylcarbamoyladenosine tRNA methylthiotransferase MtaB (451 aa).

The region spanning 2 to 114 is the MTTase N-terminal domain; the sequence is ATVAFHTLGC…MLGYIDQYRE (113 aa). [4Fe-4S] cluster is bound by residues Cys11, Cys47, Cys78, Cys153, Cys157, and Cys160. In terms of domain architecture, Radical SAM core spans 139–369; sequence FTDRTRASLK…IALSDQLAKE (231 aa). The TRAM domain occupies 372-437; it reads SQYENEVLEI…YPYNEGQFVR (66 aa).

The protein belongs to the methylthiotransferase family. MtaB subfamily. It depends on [4Fe-4S] cluster as a cofactor.

It localises to the cytoplasm. The enzyme catalyses N(6)-L-threonylcarbamoyladenosine(37) in tRNA + (sulfur carrier)-SH + AH2 + 2 S-adenosyl-L-methionine = 2-methylsulfanyl-N(6)-L-threonylcarbamoyladenosine(37) in tRNA + (sulfur carrier)-H + 5'-deoxyadenosine + L-methionine + A + S-adenosyl-L-homocysteine + 2 H(+). Catalyzes the methylthiolation of N6-threonylcarbamoyladenosine (t(6)A), leading to the formation of 2-methylthio-N6-threonylcarbamoyladenosine (ms(2)t(6)A) at position 37 in tRNAs that read codons beginning with adenine. The polypeptide is Threonylcarbamoyladenosine tRNA methylthiotransferase MtaB (mtaB) (Bacillus subtilis (strain 168)).